Consider the following 490-residue polypeptide: Bifunctional protein HldE (490 aa).

Residues 1-330 form a ribokinase region; sequence MERKEIESLF…AEIGHAHPDS (330 aa). Residue 205 to 208 coordinates ATP; it reads NRKE. D275 is a catalytic residue. The tract at residues 356 to 490 is cytidylyltransferase; that stretch reads FTNGCFDLLH…EKIRTGSIKE (135 aa).

The protein in the N-terminal section; belongs to the carbohydrate kinase PfkB family. It in the C-terminal section; belongs to the cytidylyltransferase family. In terms of assembly, homodimer.

It catalyses the reaction D-glycero-beta-D-manno-heptose 7-phosphate + ATP = D-glycero-beta-D-manno-heptose 1,7-bisphosphate + ADP + H(+). The catalysed reaction is D-glycero-beta-D-manno-heptose 1-phosphate + ATP + H(+) = ADP-D-glycero-beta-D-manno-heptose + diphosphate. It functions in the pathway nucleotide-sugar biosynthesis; ADP-L-glycero-beta-D-manno-heptose biosynthesis; ADP-L-glycero-beta-D-manno-heptose from D-glycero-beta-D-manno-heptose 7-phosphate: step 1/4. The protein operates within nucleotide-sugar biosynthesis; ADP-L-glycero-beta-D-manno-heptose biosynthesis; ADP-L-glycero-beta-D-manno-heptose from D-glycero-beta-D-manno-heptose 7-phosphate: step 3/4. In terms of biological role, catalyzes the phosphorylation of D-glycero-D-manno-heptose 7-phosphate at the C-1 position to selectively form D-glycero-beta-D-manno-heptose-1,7-bisphosphate. Functionally, catalyzes the ADP transfer from ATP to D-glycero-beta-D-manno-heptose 1-phosphate, yielding ADP-D-glycero-beta-D-manno-heptose. In Geotalea uraniireducens (strain Rf4) (Geobacter uraniireducens), this protein is Bifunctional protein HldE.